The following is a 282-amino-acid chain: HTH-type transcriptional activator RhaR (282 aa).

The region spanning 179-277 is the HTH araC/xylS-type domain; that stretch reads DKLITRLAAS…GMTPSQWRHL (99 aa). DNA-binding regions (H-T-H motif) lie at residues 196-217 and 244-267; these read DKFC…RQQT and ISDI…TRET.

As to quaternary structure, binds DNA as a dimer.

It localises to the cytoplasm. In terms of biological role, activates expression of the rhaSR operon in response to L-rhamnose. The polypeptide is HTH-type transcriptional activator RhaR (Shigella dysenteriae serotype 1 (strain Sd197)).